A 250-amino-acid polypeptide reads, in one-letter code: Proteasome subunit alpha type-4-A (250 aa).

Residues lysine 40 and lysine 64 each participate in a glycyl lysine isopeptide (Lys-Gly) (interchain with G-Cter in ubiquitin) cross-link.

The protein belongs to the peptidase T1A family. In terms of assembly, component of the 20S core complex of the 26S proteasome. The 26S proteasome is composed of a core protease (CP), known as the 20S proteasome, capped at one or both ends by the 19S regulatory particle (RP/PA700). The 20S proteasome core is composed of 28 subunits that are arranged in four stacked rings, resulting in a barrel-shaped structure. The two end rings are each formed by seven alpha subunits, and the two central rings are each formed by seven beta subunits. The catalytic chamber with the active sites is on the inside of the barrel. As to expression, ubiquitous low levels, higher expression in siliques and flowers.

The protein localises to the cytoplasm. Its subcellular location is the nucleus. In terms of biological role, the proteasome is a multicatalytic proteinase complex which is characterized by its ability to cleave peptides with Arg, Phe, Tyr, Leu, and Glu adjacent to the leaving group at neutral or slightly basic pH. The proteasome has an ATP-dependent proteolytic activity. The sequence is that of Proteasome subunit alpha type-4-A (PAC1) from Arabidopsis thaliana (Mouse-ear cress).